The primary structure comprises 100 residues: ATP synthase subunit c (100 aa).

A run of 2 helical transmembrane segments spans residues 27-47 (SVIA…IGMG) and 72-92 (FIAL…TLIV).

The protein belongs to the ATPase C chain family. In terms of assembly, F-type ATPases have 2 components, F(1) - the catalytic core - and F(0) - the membrane proton channel. F(1) has five subunits: alpha(3), beta(3), gamma(1), delta(1), epsilon(1). F(0) has three main subunits: a(1), b(2) and c(10-14). The alpha and beta chains form an alternating ring which encloses part of the gamma chain. F(1) is attached to F(0) by a central stalk formed by the gamma and epsilon chains, while a peripheral stalk is formed by the delta and b chains.

Its subcellular location is the cell inner membrane. Functionally, f(1)F(0) ATP synthase produces ATP from ADP in the presence of a proton or sodium gradient. F-type ATPases consist of two structural domains, F(1) containing the extramembraneous catalytic core and F(0) containing the membrane proton channel, linked together by a central stalk and a peripheral stalk. During catalysis, ATP synthesis in the catalytic domain of F(1) is coupled via a rotary mechanism of the central stalk subunits to proton translocation. This chain is ATP synthase subunit c, found in Campylobacter curvus (strain 525.92).